The sequence spans 181 residues: MRIDKNLPNYLTIARIMVIPVIILLFYINNSLARKLGALLFVLASITDFFDGYIARKYNLVTSFGKMFDPIADKLLVGCVTIMLLKKDNVDEIPCLLILAREFLVSGLREFLALVKVSVPVSRLAKLKTFLQMFALSILILGSKGSGIIYLDIVGEIILWIAAFLTIITGYSYFKACKTYF.

Transmembrane regions (helical) follow at residues 8 to 28, 35 to 55, 64 to 84, and 148 to 168; these read PNYLTIARIMVIPVIILLFYI, KLGALLFVLASITDFFDGYIA, FGKMFDPIADKLLVGCVTIML, and IIYLDIVGEIILWIAAFLTII.

The protein belongs to the CDP-alcohol phosphatidyltransferase class-I family.

The protein resides in the cell membrane. The catalysed reaction is a CDP-1,2-diacyl-sn-glycerol + sn-glycerol 3-phosphate = a 1,2-diacyl-sn-glycero-3-phospho-(1'-sn-glycero-3'-phosphate) + CMP + H(+). Its pathway is phospholipid metabolism; phosphatidylglycerol biosynthesis; phosphatidylglycerol from CDP-diacylglycerol: step 1/2. This protein catalyzes the committed step to the synthesis of the acidic phospholipids. This Rickettsia prowazekii (strain Madrid E) protein is CDP-diacylglycerol--glycerol-3-phosphate 3-phosphatidyltransferase (pgsA).